The following is a 405-amino-acid chain: Polyketide biosynthesis cytochrome P450 PksS (405 aa).

A helical transmembrane segment spans residues 231 to 251 (LYSMLFLLVVAGLETTVNLLG). Residue Cys-352 participates in heme binding.

This sequence belongs to the cytochrome P450 family.

The protein localises to the cell membrane. Its pathway is antibiotic biosynthesis; bacillaene biosynthesis. In terms of biological role, involved in the metabolism of the antibiotic polyketide bacillaene which is involved in secondary metabolism. The substrate is dihydrobacillaene. This Bacillus subtilis (strain 168) protein is Polyketide biosynthesis cytochrome P450 PksS (pksS).